The chain runs to 318 residues: Thymidylate synthase (318 aa).

Residues R25 and R180–R181 each bind dUMP. C200 (nucleophile) is an active-site residue. DUMP-binding positions include R220–D223, N231, and H261–Y263. D223 is a binding site for (6R)-5,10-methylene-5,6,7,8-tetrahydrofolate. A317 contributes to the (6R)-5,10-methylene-5,6,7,8-tetrahydrofolate binding site.

It belongs to the thymidylate synthase family. Bacterial-type ThyA subfamily. In terms of assembly, homodimer.

It is found in the cytoplasm. It carries out the reaction dUMP + (6R)-5,10-methylene-5,6,7,8-tetrahydrofolate = 7,8-dihydrofolate + dTMP. It functions in the pathway pyrimidine metabolism; dTTP biosynthesis. In terms of biological role, catalyzes the reductive methylation of 2'-deoxyuridine-5'-monophosphate (dUMP) to 2'-deoxythymidine-5'-monophosphate (dTMP) while utilizing 5,10-methylenetetrahydrofolate (mTHF) as the methyl donor and reductant in the reaction, yielding dihydrofolate (DHF) as a by-product. This enzymatic reaction provides an intracellular de novo source of dTMP, an essential precursor for DNA biosynthesis. In Lactobacillus helveticus (strain DPC 4571), this protein is Thymidylate synthase.